A 113-amino-acid chain; its full sequence is Large ribosomal subunit protein uL22 (113 aa).

It belongs to the universal ribosomal protein uL22 family. Part of the 50S ribosomal subunit.

Its function is as follows. This protein binds specifically to 23S rRNA; its binding is stimulated by other ribosomal proteins, e.g. L4, L17, and L20. It is important during the early stages of 50S assembly. It makes multiple contacts with different domains of the 23S rRNA in the assembled 50S subunit and ribosome. The globular domain of the protein is located near the polypeptide exit tunnel on the outside of the subunit, while an extended beta-hairpin is found that lines the wall of the exit tunnel in the center of the 70S ribosome. This chain is Large ribosomal subunit protein uL22, found in Bacillus cereus (strain ATCC 10987 / NRS 248).